The chain runs to 74 residues: Protein krueppel (74 aa).

4 consecutive C2H2-type zinc fingers follow at residues 1–4, 10–32, 38–60, and 66–74; these read ERTH, FKCP…MRLH, YHCS…LRVH, and YTCEICKAK.

This sequence belongs to the krueppel C2H2-type zinc-finger protein family.

The protein resides in the nucleus. Krueppel is a gap class segmentation protein. This is Protein krueppel (Kr) from Bradysia coprophila (Dark-winged fungus gnat).